The primary structure comprises 413 residues: Arginine biosynthesis bifunctional protein ArgJ (413 aa).

T163, K189, T200, E286, N408, and T413 together coordinate substrate. The Nucleophile role is filled by T200.

Belongs to the ArgJ family. In terms of assembly, heterotetramer of two alpha and two beta chains.

It is found in the cytoplasm. It carries out the reaction N(2)-acetyl-L-ornithine + L-glutamate = N-acetyl-L-glutamate + L-ornithine. It catalyses the reaction L-glutamate + acetyl-CoA = N-acetyl-L-glutamate + CoA + H(+). It functions in the pathway amino-acid biosynthesis; L-arginine biosynthesis; L-ornithine and N-acetyl-L-glutamate from L-glutamate and N(2)-acetyl-L-ornithine (cyclic): step 1/1. It participates in amino-acid biosynthesis; L-arginine biosynthesis; N(2)-acetyl-L-ornithine from L-glutamate: step 1/4. In terms of biological role, catalyzes two activities which are involved in the cyclic version of arginine biosynthesis: the synthesis of N-acetylglutamate from glutamate and acetyl-CoA as the acetyl donor, and of ornithine by transacetylation between N(2)-acetylornithine and glutamate. The chain is Arginine biosynthesis bifunctional protein ArgJ from Staphylococcus aureus (strain Mu50 / ATCC 700699).